The primary structure comprises 243 residues: MSDRMAKFKAGMPKEVIDAMKQEFKDNYDTNKDGTVSCAELAKLMDCPEEEAQRIITGVDVNCDGRMQFDEFLLYMEGYTKERLYSSDEIKQMFDDLDKDGNGRISPDELSKGVGEISTKLVEGMANKLIQEADKDGDGHVNMEEFVDTLVAKLPLCFKKCFHEDFDKNGDGSLTNAEMSQLLNRNLPGQYSEELINEMISRVDLNGDGRVQFGEFLMHAQNLSKDDIKNQFMAIDKDKNGKI.

7 EF-hand domains span residues 15 to 49, 47 to 82, 85 to 120, 121 to 156, 157 to 189, 191 to 226, and 227 to 243; these read EVIDAMKQEFKDNYDTNKDGTVSCAELAKLMDCPE, CPEEEAQRIITGVDVNCDGRMQFDEFLLYMEGYTKE, YSSDEIKQMFDDLDKDGNGRISPDELSKGVGEISTK, LVEGMANKLIQEADKDGDGHVNMEEFVDTLVAKLPL, CFKKCFHEDFDKNGDGSLTNAEMSQLLNRNLPG, YSEELINEMISRVDLNGDGRVQFGEFLMHAQNLSKD, and DIKNQFMAIDKDKNGKI. Ca(2+) contacts are provided by D29, N31, D33, T35, E40, D60, N62, D64, R66, E71, D98, D100, N102, R104, E109, D134, D136, D138, H140, E145, D167, N169, D171, S173, E178, D204, N206, D208, R210, and E215.

In terms of tissue distribution, aboral ectoderm, a squamous epithelium covering the surface of the late stage embryo and larva.

Calcium-binding protein involved in larval development and metamorphosis. Likely to function as calcium buffers mediating the transport of calcium from the sea water to the blastocoel where calcium is required for skeleton formation. This chain is Calcium-binding protein LPS1-beta, found in Lytechinus pictus (Painted sea urchin).